The sequence spans 312 residues: Serine/threonine-protein kinase ppk11 (312 aa).

Positions 6 to 258 (YRDLQLIGQG…AEYLSKHKFI (253 aa)) constitute a Protein kinase domain. Residues 12–20 (IGQGSFGSV) and K35 each bind ATP. The active-site Proton acceptor is D127.

The protein belongs to the protein kinase superfamily. Ser/Thr protein kinase family.

The protein resides in the cytoplasm. The protein localises to the nucleus. The enzyme catalyses L-seryl-[protein] + ATP = O-phospho-L-seryl-[protein] + ADP + H(+). It catalyses the reaction L-threonyl-[protein] + ATP = O-phospho-L-threonyl-[protein] + ADP + H(+). The polypeptide is Serine/threonine-protein kinase ppk11 (ppk11) (Schizosaccharomyces pombe (strain 972 / ATCC 24843) (Fission yeast)).